We begin with the raw amino-acid sequence, 318 residues long: Bis(5'-nucleosyl)-tetraphosphatase, symmetrical (318 aa).

Residues Pro269–Asp318 are disordered. Basic residues predominate over residues Ala282–Gly297. The span at Ala309–Asp318 shows a compositional bias: pro residues.

This sequence belongs to the Ap4A hydrolase family.

The enzyme catalyses P(1),P(4)-bis(5'-adenosyl) tetraphosphate + H2O = 2 ADP + 2 H(+). Its function is as follows. Hydrolyzes diadenosine 5',5'''-P1,P4-tetraphosphate to yield ADP. This is Bis(5'-nucleosyl)-tetraphosphatase, symmetrical from Xanthomonas oryzae pv. oryzae (strain MAFF 311018).